Here is a 657-residue protein sequence, read N- to C-terminus: Histidine ammonia-lyase (657 aa).

The 5-imidazolinone (Ala-Gly) cross-link spans 253-255 (ASG). Ser254 is subject to 2,3-didehydroalanine (Ser). Thr396 carries the phosphothreonine modification. A Phosphoserine modification is found at Ser635. Thr637 is modified (phosphothreonine). Ser648 bears the Phosphoserine mark.

The protein belongs to the PAL/histidase family. In terms of processing, contains an active site 4-methylidene-imidazol-5-one (MIO), which is formed autocatalytically by cyclization and dehydration of residues Ala-Ser-Gly.

The catalysed reaction is L-histidine = trans-urocanate + NH4(+). Its pathway is amino-acid degradation; L-histidine degradation into L-glutamate; N-formimidoyl-L-glutamate from L-histidine: step 1/3. The sequence is that of Histidine ammonia-lyase (HAL) from Homo sapiens (Human).